The sequence spans 207 residues: Probable HTH-type transcriptional regulator YttP (207 aa).

An HTH tetR-type domain is found at 3–63; that stretch reads VSTKDKIIES…HLVSEFYEGY (61 aa). The segment at residues 26–45 is a DNA-binding region (H-T-H motif); sequence SVREIAKSADVNVAHISYYF.

The protein is Probable HTH-type transcriptional regulator YttP (yttP) of Bacillus subtilis (strain 168).